A 254-amino-acid polypeptide reads, in one-letter code: Coproheme decarboxylase (254 aa).

Fe-coproporphyrin III is bound by residues arginine 136, 150 to 154 (YPMDK), histidine 177, glutamine 190, and serine 228. Residue tyrosine 150 is part of the active site.

The protein belongs to the ChdC family. Type 1 subfamily. Requires Fe-coproporphyrin III as cofactor.

It carries out the reaction Fe-coproporphyrin III + 2 H2O2 + 2 H(+) = heme b + 2 CO2 + 4 H2O. It catalyses the reaction Fe-coproporphyrin III + H2O2 + H(+) = harderoheme III + CO2 + 2 H2O. The enzyme catalyses harderoheme III + H2O2 + H(+) = heme b + CO2 + 2 H2O. It participates in porphyrin-containing compound metabolism; protoheme biosynthesis. Involved in coproporphyrin-dependent heme b biosynthesis. Catalyzes the decarboxylation of Fe-coproporphyrin III (coproheme) to heme b (protoheme IX), the last step of the pathway. The reaction occurs in a stepwise manner with a three-propionate harderoheme intermediate. The polypeptide is Coproheme decarboxylase (Bacillus subtilis (strain 168)).